We begin with the raw amino-acid sequence, 84 residues long: Hydramacin-1 (84 aa).

Positions 1-24 (MRTVVFFILVSIFLVALKPTGTQA) are cleaved as a signal peptide. Glutamine 25 is modified (pyrrolidone carboxylic acid). Cystine bridges form between cysteine 29–cysteine 72, cysteine 36–cysteine 65, cysteine 51–cysteine 81, and cysteine 55–cysteine 83.

As to expression, expressed in the endodermal epithelium.

It is found in the secreted. Its subcellular location is the target cell membrane. Cationic antimicrobial peptide potently active against Gram-positive and Gram-negative bacteria including multi-resistant human pathogenic strains. Is not active against the Gram-positive Coccus species, Gram-negative non-fermentation species and against the fungus C.albicans. It leads to aggregation of bacteria as an initial step of its bactericidal mechanism. Aggregated cells are connected via electron-dense contacts and adopt a thorn apple-like morphology. Hydramycin contains a belt of positively charged residues that separate two hydrophobic areas. This structure may explain the observed aggregation of bacteria, since each of these areas can immerse into the outer leaflets of the membranes of two individual bacteria. Is able to permeabilize membranes of viable bacteria at low and neutral pH values, but no pore-forming activity is not detected. The protein is Hydramacin-1 of Hydra vulgaris (Hydra).